Here is a 227-residue protein sequence, read N- to C-terminus: UPF0758 protein Psyc_1834 (227 aa).

Residues 102–224 enclose the MPN domain; that stretch reads GLGRSQMVKD…TLSYAENCLA (123 aa). Zn(2+)-binding residues include His-173, His-175, and Asp-186. A JAMM motif motif is present at residues 173–186; the sequence is HNHPHTDATPSTAD.

It belongs to the UPF0758 family.

The protein is UPF0758 protein Psyc_1834 of Psychrobacter arcticus (strain DSM 17307 / VKM B-2377 / 273-4).